We begin with the raw amino-acid sequence, 369 residues long: UDP-N-acetylglucosamine--N-acetylmuramyl-(pentapeptide) pyrophosphoryl-undecaprenol N-acetylglucosamine transferase (369 aa).

UDP-N-acetyl-alpha-D-glucosamine-binding positions include 10-12, asparagine 124, arginine 161, serine 195, and glutamine 295; that span reads TAG.

The protein belongs to the glycosyltransferase 28 family. MurG subfamily.

The protein localises to the cell membrane. It catalyses the reaction di-trans,octa-cis-undecaprenyl diphospho-N-acetyl-alpha-D-muramoyl-L-alanyl-D-glutamyl-meso-2,6-diaminopimeloyl-D-alanyl-D-alanine + UDP-N-acetyl-alpha-D-glucosamine = di-trans,octa-cis-undecaprenyl diphospho-[N-acetyl-alpha-D-glucosaminyl-(1-&gt;4)]-N-acetyl-alpha-D-muramoyl-L-alanyl-D-glutamyl-meso-2,6-diaminopimeloyl-D-alanyl-D-alanine + UDP + H(+). Its pathway is cell wall biogenesis; peptidoglycan biosynthesis. Its function is as follows. Cell wall formation. Catalyzes the transfer of a GlcNAc subunit on undecaprenyl-pyrophosphoryl-MurNAc-pentapeptide (lipid intermediate I) to form undecaprenyl-pyrophosphoryl-MurNAc-(pentapeptide)GlcNAc (lipid intermediate II). In Acidothermus cellulolyticus (strain ATCC 43068 / DSM 8971 / 11B), this protein is UDP-N-acetylglucosamine--N-acetylmuramyl-(pentapeptide) pyrophosphoryl-undecaprenol N-acetylglucosamine transferase.